Here is a 338-residue protein sequence, read N- to C-terminus: uncharacterized protein (338 aa).

The N-terminal stretch at 1-29 is a signal peptide; it reads MIKQLCKNITICTLALSTTFTVLPATSFA.

It belongs to the aerolysin family.

This is an uncharacterized protein from Staphylococcus aureus (strain USA300).